We begin with the raw amino-acid sequence, 345 residues long: S-adenosylmethionine:tRNA ribosyltransferase-isomerase (345 aa).

It belongs to the QueA family. In terms of assembly, monomer.

Its subcellular location is the cytoplasm. It catalyses the reaction 7-aminomethyl-7-carbaguanosine(34) in tRNA + S-adenosyl-L-methionine = epoxyqueuosine(34) in tRNA + adenine + L-methionine + 2 H(+). It functions in the pathway tRNA modification; tRNA-queuosine biosynthesis. Transfers and isomerizes the ribose moiety from AdoMet to the 7-aminomethyl group of 7-deazaguanine (preQ1-tRNA) to give epoxyqueuosine (oQ-tRNA). This Shewanella loihica (strain ATCC BAA-1088 / PV-4) protein is S-adenosylmethionine:tRNA ribosyltransferase-isomerase.